Reading from the N-terminus, the 255-residue chain is Hydroxyacylglutathione hydrolase (255 aa).

Histidine 56, histidine 58, aspartate 60, histidine 61, histidine 114, aspartate 133, and histidine 171 together coordinate Zn(2+).

This sequence belongs to the metallo-beta-lactamase superfamily. Glyoxalase II family. Monomer. Zn(2+) serves as cofactor.

The enzyme catalyses an S-(2-hydroxyacyl)glutathione + H2O = a 2-hydroxy carboxylate + glutathione + H(+). It functions in the pathway secondary metabolite metabolism; methylglyoxal degradation; (R)-lactate from methylglyoxal: step 2/2. Its function is as follows. Thiolesterase that catalyzes the hydrolysis of S-D-lactoyl-glutathione to form glutathione and D-lactic acid. The sequence is that of Hydroxyacylglutathione hydrolase from Rhodopseudomonas palustris (strain BisB18).